The sequence spans 210 residues: Superoxide dismutase [Mn], mitochondrial (210 aa).

Residues His29, His77, Asp164, and His168 each coordinate Mn(2+).

The protein belongs to the iron/manganese superoxide dismutase family. In terms of assembly, homotetramer. Requires Mn(2+) as cofactor.

Its subcellular location is the mitochondrion matrix. It catalyses the reaction 2 superoxide + 2 H(+) = H2O2 + O2. Destroys superoxide anion radicals which are normally produced within the cells and which are toxic to biological systems. The protein is Superoxide dismutase [Mn], mitochondrial (sodB) of Aspergillus niger.